The chain runs to 213 residues: Probable aspartate aminotransferase (213 aa).

L-aspartate contacts are provided by Gly47, Trp133, and Asn183.

Belongs to the class-I pyridoxal-phosphate-dependent aminotransferase family. Homodimer. The cofactor is pyridoxal 5'-phosphate.

The protein resides in the cytoplasm. The enzyme catalyses L-aspartate + 2-oxoglutarate = oxaloacetate + L-glutamate. The protein is Probable aspartate aminotransferase (aspC) of Streptomyces griseus.